Here is a 359-residue protein sequence, read N- to C-terminus: Protein-glutamate methylesterase/protein-glutamine glutaminase 1 (359 aa).

One can recognise a Response regulatory domain in the interval 4 to 121; it reads SVLIVDDSAV…RAFLLEAAKE (118 aa). The residue at position 55 (Asp55) is a 4-aspartylphosphate. A CheB-type methylesterase domain is found at 169–354; the sequence is YRTTEKIIAI…MSLERIAHML (186 aa). Residues Ser181, His207, and Asp303 contribute to the active site.

It belongs to the CheB family. Post-translationally, phosphorylated by CheA. Phosphorylation of the N-terminal regulatory domain activates the methylesterase activity.

Its subcellular location is the cytoplasm. It carries out the reaction [protein]-L-glutamate 5-O-methyl ester + H2O = L-glutamyl-[protein] + methanol + H(+). It catalyses the reaction L-glutaminyl-[protein] + H2O = L-glutamyl-[protein] + NH4(+). Involved in chemotaxis. Part of a chemotaxis signal transduction system that modulates chemotaxis in response to various stimuli. Catalyzes the demethylation of specific methylglutamate residues introduced into the chemoreceptors (methyl-accepting chemotaxis proteins or MCP) by CheR. Also mediates the irreversible deamidation of specific glutamine residues to glutamic acid. The chain is Protein-glutamate methylesterase/protein-glutamine glutaminase 1 from Chromobacterium violaceum (strain ATCC 12472 / DSM 30191 / JCM 1249 / CCUG 213 / NBRC 12614 / NCIMB 9131 / NCTC 9757 / MK).